The chain runs to 72 residues: Disintegrin crotatroxin (72 aa).

The region spanning A1–G72 is the Disintegrin domain. 6 disulfide bridges follow: C5–C20, C7–C15, C14–C37, C28–C34, C33–C58, and C46–C65. Positions R50–D52 match the Cell attachment site motif.

The protein belongs to the venom metalloproteinase (M12B) family. P-II subfamily. P-IIa sub-subfamily. In terms of assembly, monomer. In terms of tissue distribution, expressed by the venom gland.

It localises to the secreted. Inhibits fibrinogen interaction with platelets. Acts by binding to the alpha-IIb/beta-3 (ITGA2B/ITGB3) on the platelet surface and inhibits aggregation induced by ADP, thrombin, platelet-activating factor and collagen. In terms of biological role, inhibits ADP-induced platelet aggregation (IC(50) = 17.5nM), cancer cell migration in vitro, and experimental lung tumor colonization of cancer cells. In Crotalus atrox (Western diamondback rattlesnake), this protein is Disintegrin crotatroxin.